The primary structure comprises 931 residues: Protein phosphatase 1 regulatory subunit 37 homolog (931 aa).

Residues 20–71 (TAASSPASPIPPTSPSMFATPPHQQSHSSATSVRKKVCQEANSSADDPDSDA) are disordered. The segment covering 41-51 (PHQQSHSSATS) has biased composition (polar residues). 8 LRR repeats span residues 232–259 (AISLQMLNLRYTNLNDRSIPSLCKLARA), 262–285 (SASLTCIHLENTQMSGKNLLVLIC), 290–314 (NTGIRELYLGDNGLQPTDGSHIYQL), 323–346 (LLDLRNNNIGDSGVRHICEGLRNR), 351–374 (KSALSAMVLWNNNVTGASMDSLAE), 379–407 (NTKIETLNIGSNNLGVEGVARLKPALVSN), 409–430 (HLHRLGLQNTGINCEGAIILAE), and 435–458 (NTALLRVDIRDNPIALAGLLALHS). The span at 519–533 (QDHVSEDTEKENKDA) shows a compositional bias: basic and acidic residues. Disordered stretches follow at residues 519–602 (QDHV…RHQR) and 780–807 (PDCTNTCEEPTTSREAERKRAEETIRQR). Positions 534–547 (DNDDKEPENEDGDT) are enriched in acidic residues. The span at 554 to 563 (SDASADQSDS) shows a compositional bias: low complexity. 2 stretches are compositionally biased toward basic and acidic residues: residues 564 to 584 (PADKEKSEKSKKENNNNEKRP) and 790 to 807 (TTSREAERKRAEETIRQR).

The protein belongs to the PPP1R37 family.

The polypeptide is Protein phosphatase 1 regulatory subunit 37 homolog (Caenorhabditis briggsae).